We begin with the raw amino-acid sequence, 360 residues long: UDP-N-acetylglucosamine--N-acetylmuramyl-(pentapeptide) pyrophosphoryl-undecaprenol N-acetylglucosamine transferase (360 aa).

UDP-N-acetyl-alpha-D-glucosamine-binding positions include 13–15 (TGG), arginine 164, serine 192, and glutamine 293.

This sequence belongs to the glycosyltransferase 28 family. MurG subfamily.

It localises to the cell inner membrane. The catalysed reaction is di-trans,octa-cis-undecaprenyl diphospho-N-acetyl-alpha-D-muramoyl-L-alanyl-D-glutamyl-meso-2,6-diaminopimeloyl-D-alanyl-D-alanine + UDP-N-acetyl-alpha-D-glucosamine = di-trans,octa-cis-undecaprenyl diphospho-[N-acetyl-alpha-D-glucosaminyl-(1-&gt;4)]-N-acetyl-alpha-D-muramoyl-L-alanyl-D-glutamyl-meso-2,6-diaminopimeloyl-D-alanyl-D-alanine + UDP + H(+). Its pathway is cell wall biogenesis; peptidoglycan biosynthesis. In terms of biological role, cell wall formation. Catalyzes the transfer of a GlcNAc subunit on undecaprenyl-pyrophosphoryl-MurNAc-pentapeptide (lipid intermediate I) to form undecaprenyl-pyrophosphoryl-MurNAc-(pentapeptide)GlcNAc (lipid intermediate II). This chain is UDP-N-acetylglucosamine--N-acetylmuramyl-(pentapeptide) pyrophosphoryl-undecaprenol N-acetylglucosamine transferase, found in Chromobacterium violaceum (strain ATCC 12472 / DSM 30191 / JCM 1249 / CCUG 213 / NBRC 12614 / NCIMB 9131 / NCTC 9757 / MK).